The sequence spans 660 residues: Macrolide export ATP-binding/permease protein MacB (660 aa).

In terms of domain architecture, ABC transporter spans 10 to 248 (LVLENIVRKF…TDSQALYGKQ (239 aa)). Residue 46–53 (GASGSGKS) coordinates ATP. The next 4 membrane-spanning stretches (helical) occupy residues 285 to 305 (FLTMLGVIIGIGAIIAMVALG), 532 to 552 (ILTLLVSSIAAISLIVGGIGV), 593 to 613 (VIGGGLGILFGMSIGGLFLLF), and 625 to 645 (SIILSLTFSTLIGVCFGFSPA).

The protein belongs to the ABC transporter superfamily. Macrolide exporter (TC 3.A.1.122) family. Homodimer.

The protein localises to the cell inner membrane. Non-canonical ABC transporter that contains transmembrane domains (TMD), which form a pore in the inner membrane, and an ATP-binding domain (NBD), which is responsible for energy generation. Confers resistance against macrolides. The polypeptide is Macrolide export ATP-binding/permease protein MacB (Bartonella henselae (strain ATCC 49882 / DSM 28221 / CCUG 30454 / Houston 1) (Rochalimaea henselae)).